The primary structure comprises 410 residues: Lissencephaly-1 homolog (410 aa).

One can recognise a LisH domain in the interval 7–39; that stretch reads QQEELQLAVHAYLVEAGHAEAAAAMAKSANLGD. The stretch at 55–80 forms a coiled coil; sequence TTITRLQKRNMELQAEVEELRSSARA. WD repeat units follow at residues 104–143, 146–185, 188–227, 230–269, 294–333, 336–375, and 378–410; these read GHRL…FERS, GHTN…CTKT, GHDH…CLQT, GHSD…CKHV, MIFG…HLAR, GHDN…VSKT, and AHNH…WECN.

This sequence belongs to the WD repeat LIS1/nudF family.

It localises to the cytoplasm. Its subcellular location is the cytoskeleton. The protein localises to the microtubule organizing center. It is found in the centrosome. Functionally, positively regulates the activity of the minus-end directed microtubule motor protein dynein. May enhance dynein-mediated microtubule sliding by targeting dynein to the microtubule plus end. Required for several dynein- and microtubule-dependent processes. The sequence is that of Lissencephaly-1 homolog from Monosiga brevicollis (Choanoflagellate).